Here is a 76-residue protein sequence, read N- to C-terminus: Kappa-actitoxin-Avd4e (76 aa).

A signal peptide spans 1–19 (MNKALFLCLVVLCAAVVFA). The propeptide occupies 20-31 (AEDLQKAKHAPF). 3 disulfide bridges follow: Cys-37/Cys-72, Cys-39/Cys-65, and Cys-55/Cys-73. A Cell attachment site motif is present at residues 45 to 47 (RGD).

This sequence belongs to the sea anemone type 3 (BDS) potassium channel toxin family. In terms of tissue distribution, moderately expressed in the ectodermal tissue from the distal and proximal tentacles, body wall, and oral disk.

It is found in the secreted. It localises to the nematocyst. Is member of a fraction that shows antiangiogenic activity, since it inhibits human microvascular endothelial cells (HMEC) tubulogenesis. This protein could be a kunitz-type inhibitor with a RGD motif that could block angiogenesis in binding on integrins. Blocks Kv3 voltage-gated potassium channels. Reduces blood pressure. This chain is Kappa-actitoxin-Avd4e, found in Anemonia viridis (Snakelocks anemone).